A 496-amino-acid polypeptide reads, in one-letter code: UDP-N-acetylmuramoylalanine--D-glutamate ligase (496 aa).

130–136 contacts ATP; sequence GTNGKTT.

The protein belongs to the MurCDEF family.

The protein localises to the cytoplasm. The enzyme catalyses UDP-N-acetyl-alpha-D-muramoyl-L-alanine + D-glutamate + ATP = UDP-N-acetyl-alpha-D-muramoyl-L-alanyl-D-glutamate + ADP + phosphate + H(+). It participates in cell wall biogenesis; peptidoglycan biosynthesis. Functionally, cell wall formation. Catalyzes the addition of glutamate to the nucleotide precursor UDP-N-acetylmuramoyl-L-alanine (UMA). This is UDP-N-acetylmuramoylalanine--D-glutamate ligase from Mycobacterium bovis (strain ATCC BAA-935 / AF2122/97).